A 465-amino-acid chain; its full sequence is UDP-N-acetylmuramoylalanine--D-glutamate ligase (465 aa).

115–121 serves as a coordination point for ATP; sequence GTDGKTT.

The protein belongs to the MurCDEF family.

The protein resides in the cytoplasm. It carries out the reaction UDP-N-acetyl-alpha-D-muramoyl-L-alanine + D-glutamate + ATP = UDP-N-acetyl-alpha-D-muramoyl-L-alanyl-D-glutamate + ADP + phosphate + H(+). It participates in cell wall biogenesis; peptidoglycan biosynthesis. Cell wall formation. Catalyzes the addition of glutamate to the nucleotide precursor UDP-N-acetylmuramoyl-L-alanine (UMA). The chain is UDP-N-acetylmuramoylalanine--D-glutamate ligase from Chlorobaculum tepidum (strain ATCC 49652 / DSM 12025 / NBRC 103806 / TLS) (Chlorobium tepidum).